A 749-amino-acid chain; its full sequence is Metabotropic glutamate receptor-like protein M (749 aa).

The N-terminal stretch at 1-22 (MIKLILSLIFLIICCNINPSES) is a signal peptide. Residues 23–385 (FKLITLTTGP…KIEFSSSVQK (363 aa)) lie on the Extracellular side of the membrane. Residues N67, N164, N257, N271, and N345 are each glycosylated (N-linked (GlcNAc...) asparagine). The helical transmembrane segment at 386–406 (GFSIVSGCLIAFVILMMVGIV) threads the bilayer. The Cytoplasmic portion of the chain corresponds to 407–419 (YYKDTPSIRSASP). The chain crosses the membrane as a helical span at residues 420–440 (IFLNFSLIGGIIIYIGIIIWV). At 441-456 (GPISTHQCNARFWLVT) the chain is on the extracellular side. The chain crosses the membrane as a helical span at residues 457–477 (LGFSTLIGSLVVKNFRIWLIF). The Cytoplasmic segment spans residues 478-492 (DNPELKAIKITNYQL). Residues 493 to 513 (FPWVGLCLVINIVLMAILTSV) traverse the membrane as a helical segment. Residues 514 to 544 (GDLKAIEAQGIDSLGKYEYMTVCKMNSAGAS) lie on the Extracellular side of the membrane. A helical membrane pass occupies residues 545–565 (TLYSILAYFAALLLVGVFVSW). Residues 566-579 (KIRIVDIEEFNESK) lie on the Cytoplasmic side of the membrane. The chain crosses the membrane as a helical span at residues 580 to 600 (AIANTLYAVSFCLFVIVPLMI). At 601-609 (SPQEKQSET) the chain is on the extracellular side. The helical transmembrane segment at 610-630 (IILCVAGLFITTAALLIVFIP) threads the bilayer. Over 631-749 (KFWRVFIYGK…EEPVKTESQE (119 aa)) the chain is Cytoplasmic. The interval 658 to 749 (ARAESLSKNS…EEPVKTESQE (92 aa)) is disordered. The span at 698–716 (SSLSEPNKPTKNNDGNVNV) shows a compositional bias: polar residues. The segment covering 725–740 (FTDDTISEFDENEVNE) has biased composition (acidic residues).

It in the N-terminal section; belongs to the BMP lipoprotein family. The protein in the C-terminal section; belongs to the G-protein coupled receptor 3 family. GABA-B receptor subfamily.

The protein resides in the membrane. The protein is Metabotropic glutamate receptor-like protein M (grlM) of Dictyostelium discoideum (Social amoeba).